A 469-amino-acid polypeptide reads, in one-letter code: Argininosuccinate lyase (469 aa).

Belongs to the lyase 1 family. Argininosuccinate lyase subfamily.

It is found in the cytoplasm. The catalysed reaction is 2-(N(omega)-L-arginino)succinate = fumarate + L-arginine. It participates in amino-acid biosynthesis; L-arginine biosynthesis; L-arginine from L-ornithine and carbamoyl phosphate: step 3/3. In Novosphingobium aromaticivorans (strain ATCC 700278 / DSM 12444 / CCUG 56034 / CIP 105152 / NBRC 16084 / F199), this protein is Argininosuccinate lyase.